The sequence spans 681 residues: Protein asunder (681 aa).

Residues 574–619 form a disordered region; sequence PGASHLRSYTESPLSPERLEPTSSASNSSSSILKASKRRMSSSGQR. Residues 606-612 carry the Nuclear localization signal (NLS) motif; that stretch reads LKASKRR.

Belongs to the Integrator subunit 13 family. Belongs to the multiprotein complex Integrator, at least composed of IntS1, IntS2, IntS3, IntS4, omd/IntS5, IntS6, defl/IntS7, IntS8, IntS9, IntS10, IntS11, IntS12, asun/IntS13, IntS14 and IntS15. The core complex associates with protein phosphatase 2A subunits mts/PP2A and Pp2A-29B, to form the Integrator-PP2A (INTAC) complex. In terms of processing, phosphorylated.

The protein resides in the nucleus. The protein localises to the cytoplasm. It is found in the perinuclear region. In terms of biological role, component of the integrator complex, a multiprotein complex that terminates RNA polymerase II (Pol II) transcription in the promoter-proximal region of genes. The integrator complex provides a quality checkpoint during transcription elongation by driving premature transcription termination of transcripts that are unfavorably configured for transcriptional elongation: the complex terminates transcription by (1) catalyzing dephosphorylation of the C-terminal domain (CTD) of Pol II subunit Polr2A/Rbp1 and Spt5, and (2) degrading the exiting nascent RNA transcript via endonuclease activity. The integrator complex is also involved in the 3'-end processing of the U7 snRNA, and also the spliceosomal snRNAs U1, U2, U4 and U5. This chain is Protein asunder (asun), found in Drosophila virilis (Fruit fly).